Reading from the N-terminus, the 909-residue chain is Protein translocase subunit SecA (909 aa).

ATP contacts are provided by residues Q85, 103–107 (GEGKT), and D512. Residues 866-899 (HETSATGGEEEINKPVVKGKKIGRNDPCPCGSGK) are disordered. Residues C893, C895, C904, and C905 each contribute to the Zn(2+) site.

Belongs to the SecA family. As to quaternary structure, monomer and homodimer. Part of the essential Sec protein translocation apparatus which comprises SecA, SecYEG and auxiliary proteins SecDF. Other proteins may also be involved. It depends on Zn(2+) as a cofactor.

The protein localises to the cell membrane. It localises to the cytoplasm. It catalyses the reaction ATP + H2O + cellular proteinSide 1 = ADP + phosphate + cellular proteinSide 2.. Functionally, part of the Sec protein translocase complex. Interacts with the SecYEG preprotein conducting channel. Has a central role in coupling the hydrolysis of ATP to the transfer of proteins into and across the cell membrane, serving as an ATP-driven molecular motor driving the stepwise translocation of polypeptide chains across the membrane. The sequence is that of Protein translocase subunit SecA from Finegoldia magna (strain ATCC 29328 / DSM 20472 / WAL 2508) (Peptostreptococcus magnus).